The chain runs to 140 residues: uncharacterized protein (140 aa).

ATP is bound at residue 18–25 (GTNGSGKS).

This is an uncharacterized protein from Haemophilus influenzae (strain ATCC 51907 / DSM 11121 / KW20 / Rd).